The chain runs to 671 residues: Condensin complex subunit 2 (671 aa).

Over residues 1 to 24 (MDESLTPNPKQKPASTTTRIQAPT) the composition is skewed to polar residues. Disordered regions lie at residues 1 to 33 (MDESLTPNPKQKPASTTTRIQAPTSPFFLGSND), 404 to 444 (NSWA…KQAE), and 510 to 564 (RRKN…ISQP). The short motif at 406–415 (WAGPDHWKYR) is the Kleisin-gamma middle domain (GM domain) involved in chromosome-binding element. A compositionally biased stretch (acidic residues) spans 536–556 (VYDDDDGPFDDNENDQSDAED).

Belongs to the CND2 (condensin subunit 2) family. In terms of assembly, component of the condensin complex. In terms of tissue distribution, mostly expressed in flower buds and flowers, and, to a lower extent, in roots, stems, leaves and seedlings.

The protein resides in the cytoplasm. The protein localises to the chromosome. Functionally, regulatory subunit of the condensin complex, a complex required for conversion of interphase chromatin into mitotic-like condense chromosomes. The condensin complex probably introduces positive supercoils into relaxed DNA in the presence of type I topoisomerases and converts nicked DNA into positive knotted forms in the presence of type II topoisomerases. Essential protein. This chain is Condensin complex subunit 2 (CAPH), found in Arabidopsis thaliana (Mouse-ear cress).